Here is a 512-residue protein sequence, read N- to C-terminus: MGIQAAEISAILKEQIKNFGQQAEVAEVGRVLSVGDGIARVHGLDNVQAGEMVEFPGGIRGMALNLEVDNVGVVIFGDDRSIKEGDTVKRTKSIVDVPAGDALLGRVVDGLGNPIDGKGPIAATERRVADVKAPGIIPRKGVHEPMATGLKSVDAMIPIGRGQRELIIGDRQTGKTAIALDTILNQKSYNEAAGDDESKKLYCIYVAIGQKRSTVAQLVKKLEETGAIDYTLVVAATASDPAPMQFLAPYAATAMAEYFRDNGRHALIIYDDLSKQAVAYRQMSLLLRRPPGREAYPGDVFYLHSRLLERSAKLNKDHGAGSLTALPIIETQGGDVSAFIPTNVISITDGQIFLETELFYQGIRPAVNTGLSVSRVGSSAQTDAMKSVAGPVKLELAQYREMAAFAQFGSDLDAATQQLLNRGARLTELMKQPQYAPLTNAEIVCVIFAGTKGYLDKVPVKDVGRWEQGLLKHLRTNAKDLLADITNNDRKVKGELEDKIRAALDTYAKDFA.

169 to 176 (GDRQTGKT) provides a ligand contact to ATP.

Belongs to the ATPase alpha/beta chains family. As to quaternary structure, F-type ATPases have 2 components, CF(1) - the catalytic core - and CF(0) - the membrane proton channel. CF(1) has five subunits: alpha(3), beta(3), gamma(1), delta(1), epsilon(1). CF(0) has four main subunits: a(1), b(1), b'(1) and c(9-12).

It localises to the cell inner membrane. The catalysed reaction is ATP + H2O + 4 H(+)(in) = ADP + phosphate + 5 H(+)(out). In terms of biological role, produces ATP from ADP in the presence of a proton gradient across the membrane. The alpha chain is a regulatory subunit. The protein is ATP synthase subunit alpha 1 of Cereibacter sphaeroides (strain ATCC 17029 / ATH 2.4.9) (Rhodobacter sphaeroides).